We begin with the raw amino-acid sequence, 85 residues long: Large ribosomal subunit protein bL27 (85 aa).

This sequence belongs to the bacterial ribosomal protein bL27 family.

The sequence is that of Large ribosomal subunit protein bL27 from Campylobacter fetus subsp. fetus (strain 82-40).